We begin with the raw amino-acid sequence, 703 residues long: Methionine--tRNA ligase (703 aa).

The short motif at 15 to 25 (PYANGPVHLGH) is the 'HIGH' region element. Residues C147, C150, C160, and C163 each coordinate Zn(2+). A 'KMSKS' region motif is present at residues 345 to 349 (KFSKS). K348 provides a ligand contact to ATP. The region spanning 602 to 703 (DFQKIDLRVA…GEGINGNSVS (102 aa)) is the tRNA-binding domain.

It belongs to the class-I aminoacyl-tRNA synthetase family. MetG type 1 subfamily. As to quaternary structure, homodimer. Zn(2+) is required as a cofactor.

It localises to the cytoplasm. It catalyses the reaction tRNA(Met) + L-methionine + ATP = L-methionyl-tRNA(Met) + AMP + diphosphate. Functionally, is required not only for elongation of protein synthesis but also for the initiation of all mRNA translation through initiator tRNA(fMet) aminoacylation. This is Methionine--tRNA ligase from Chlorobaculum tepidum (strain ATCC 49652 / DSM 12025 / NBRC 103806 / TLS) (Chlorobium tepidum).